The primary structure comprises 103 residues: Small ribosomal subunit protein uS10 (103 aa).

Belongs to the universal ribosomal protein uS10 family. In terms of assembly, part of the 30S ribosomal subunit.

Involved in the binding of tRNA to the ribosomes. This chain is Small ribosomal subunit protein uS10, found in Campylobacter jejuni subsp. jejuni serotype O:6 (strain 81116 / NCTC 11828).